The sequence spans 630 residues: Chaperone protein HtpG (630 aa).

An a; substrate-binding region spans residues 1 to 339 (MKGQETRGFQ…SNDLPLNVSR (339 aa)). Positions 340-555 (EILQDNSITR…VDEMSTQMAK (216 aa)) are b. Residues 556–630 (LFAAAGQQVP…MNQLLLSEKA (75 aa)) form a c region.

It belongs to the heat shock protein 90 family. Homodimer.

It is found in the cytoplasm. Functionally, molecular chaperone. Has ATPase activity. The polypeptide is Chaperone protein HtpG (Photorhabdus laumondii subsp. laumondii (strain DSM 15139 / CIP 105565 / TT01) (Photorhabdus luminescens subsp. laumondii)).